The chain runs to 200 residues: Large ribosomal subunit protein uL4 (200 aa).

The tract at residues 43–71 is disordered; the sequence is RAQKTRAEVSGSGKKPWRQKGTGRARSGD.

It belongs to the universal ribosomal protein uL4 family. Part of the 50S ribosomal subunit.

In terms of biological role, one of the primary rRNA binding proteins, this protein initially binds near the 5'-end of the 23S rRNA. It is important during the early stages of 50S assembly. It makes multiple contacts with different domains of the 23S rRNA in the assembled 50S subunit and ribosome. Functionally, forms part of the polypeptide exit tunnel. In Histophilus somni (strain 129Pt) (Haemophilus somnus), this protein is Large ribosomal subunit protein uL4.